Consider the following 433-residue polypeptide: Inositol hexakisphosphate kinase 1 (433 aa).

Positions 100 to 160 are disordered; sequence ETVEQDDTPE…SPKVELHSHS (61 aa). Basic residues predominate over residues 113-123; that stretch reads PRRKHSRRSLH. Polar residues predominate over residues 139-149; the sequence is SFETSESSQET. Over residues 150 to 160 the composition is skewed to basic and acidic residues; it reads KSPKVELHSHS. Phosphoserine is present on Ser-151. 220–228 provides a ligand contact to substrate; it reads PCVLDLKMG. The disordered stretch occupies residues 362 to 383; the sequence is PLCGPSTSPSNTSLEAGPSSPP. Residues 366–375 are compositionally biased toward polar residues; sequence PSTSPSNTSL.

It belongs to the inositol phosphokinase (IPK) family.

The protein resides in the cytoplasm. The protein localises to the nucleus. The catalysed reaction is 1D-myo-inositol hexakisphosphate + ATP = 5-diphospho-1D-myo-inositol 1,2,3,4,6-pentakisphosphate + ADP. It carries out the reaction 1-diphospho-1D-myo-inositol 2,3,4,5,6-pentakisphosphate + ATP + H(+) = 1,5-bis(diphospho)-1D-myo-inositol 2,3,4,6-tetrakisphosphate + ADP. Its function is as follows. Converts inositol hexakisphosphate (InsP6) to diphosphoinositol pentakisphosphate (InsP7/PP-InsP5). Converts 1,3,4,5,6-pentakisphosphate (InsP5) to PP-InsP4. The polypeptide is Inositol hexakisphosphate kinase 1 (Ip6k1) (Rattus norvegicus (Rat)).